The chain runs to 416 residues: Squalene synthase (416 aa).

2 residues coordinate NADP(+): Arg-52 and Arg-77. Residues Asp-80, Glu-83, and Asp-84 each coordinate Mg(2+). Arg-218 provides a ligand contact to NADP(+). A helical membrane pass occupies residues 284–304 (SVFNFCAIPQVMAIATLAACY). The NADP(+) site is built by Lys-315 and Arg-317. A helical transmembrane segment spans residues 384-404 (PIYLSFIMLLAALSWQYLSTL).

Belongs to the phytoene/squalene synthase family. Mg(2+) is required as a cofactor.

It localises to the endoplasmic reticulum membrane. The enzyme catalyses 2 (2E,6E)-farnesyl diphosphate + NADPH + H(+) = squalene + 2 diphosphate + NADP(+). It catalyses the reaction 2 (2E,6E)-farnesyl diphosphate + NADH + H(+) = squalene + 2 diphosphate + NAD(+). It carries out the reaction presqualene diphosphate + NADH + H(+) = squalene + diphosphate + NAD(+). The catalysed reaction is presqualene diphosphate + NADPH + H(+) = squalene + diphosphate + NADP(+). The enzyme catalyses 2 (2E,6E)-farnesyl diphosphate = presqualene diphosphate + diphosphate. Its pathway is terpene metabolism; lanosterol biosynthesis; lanosterol from farnesyl diphosphate: step 1/3. Its function is as follows. Catalyzes the condensation of 2 farnesyl pyrophosphate (FPP) moieties to form squalene. Proceeds in two distinct steps. In the first half-reaction, two molecules of FPP react to form the stable presqualene diphosphate intermediate (PSQPP), with concomitant release of a proton and a molecule of inorganic diphosphate. In the second half-reaction, PSQPP undergoes heterolysis, isomerization, and reduction with NADPH or NADH to form squalene. It is the first committed enzyme of the sterol biosynthesis pathway. This Mus musculus (Mouse) protein is Squalene synthase (Fdft1).